The sequence spans 783 residues: MDFSIEEYDLTFDFDLSEFTYRGKEKIKLSGEANELVLDSVRLSIDSVKLNGSAVDFDVNDKALRIESRIKSGDVVDIDFHAKVSDTLMGLYLSKTREGTMITTQFESTGARMAFPCIDHPAYKAVFSITLVIDKDYDAISNMPVKKVETSDRKIVEFEKTPRMSTYLLYIGVGKFKYASERYKDREIILASLKDIKSKYPIDIAKRSIEFYEGYFGIPYALPKMHLISVPEFGAGAMENWGAITFREIALMATEDSGSLMKQNAAITIAHEIAHQWFGDLVTMKWWNDLWLNESFATFMSYKTVDSFSKQWDVFSDFIKSETGGALRSDSLKNTHPIEVDVKDPDEISQIFDEISYGKGASILRMIEDYVGAEDFRKGISKYLKEHAYGNAEGSDLWNAIETESGKPVNRIMEAWITKAGYPVLKVNKDGNRIRLTQEQFYLDGTSGNTEWPIPLTIITKKGKVSMLMEDEVYIDEMLKLNANNSGFYRVMYDNDTFNTVISSLDKFSNLDKWGLLNDMYAFLVSGRLSVNEYVERIKNFLNDEDHLVVEEIASQLTSLYLIKPSSQVVYQLAKDYLRNQVQRLGTKKKGEDDKISKLRGIVYQDLVTVDEDFAKELSPQFASLSEDPDLALAKAVAKARTDGLNELIDAANKYTDDEIRVRVIAAMGWCSKDQLSTIFSLIDNGTIKKQDMLYVFSFVVTNPSGRDFFFQNIDKIVSLMEHAFEGTGYTSRILEGSIPYIGLEKYEEIKAKASQIRSPSYNVGIDKGLETLEIIRKLYNKL.

Residues Glu107 and 236 to 240 (GAMEN) each bind substrate. His271 contributes to the Zn(2+) binding site. Catalysis depends on Glu272, which acts as the Proton acceptor. The Zn(2+) site is built by His275 and Glu294.

Belongs to the peptidase M1 family. Monomer. Part of the Tricorn proteolytic complex. The cofactor is Zn(2+).

Its subcellular location is the cytoplasm. Proteases F1, F2 and F3 degrade oligopeptides produced by Tricorn (themselves probably produced by the proteasome), yielding free amino acids. The polypeptide is Tricorn protease-interacting factor F2 (trf2) (Thermoplasma volcanium (strain ATCC 51530 / DSM 4299 / JCM 9571 / NBRC 15438 / GSS1)).